Consider the following 995-residue polypeptide: Putative pentatricopeptide repeat-containing protein At5g09950 (995 aa).

22 PPR repeats span residues 35–65 (DVYLCNNLINAYLETGDSVSARKVFDEMPLR), 66–100 (NCVSWACIVSGYSRNGEHKEALVFLRDMVKEGIFS), 101–137 (NQYAFVSVLRACQEIGSVGILFGRQIHGLMFKLSYAV), 138–169 (DAVVSNVLISMYWKCIGSVGYALCAFGDIEVK), 170–204 (NSVSWNSIISVYSQAGDQRSAFRIFSSMQYDGSRP), 205–241 (TEYTFGSLVTTACSLTEPDVRLLEQIMCTIQKSGLLT), 242–276 (DLFVGSGLVSAFAKSGSLSYARKVFNQMETRNAVT), 278–303 (NGLMVGLVRQKWGEEATKLFMDMNSM), 307–342 (SPESYVILLSSFPEYSLAEEVGLKKGREVHGHVITT), 348–378 (MVGIGNGLVNMYAKCGSIADARRVFYFMTDK), 379–413 (DSVSWNSMITGLDQNGCFIEAVERYKSMRRHDILP), 414–448 (GSFTLISSLSSCASLKWAKLGQQIHGESLKLGIDL), 449–483 (NVSVSNALMTLYAETGYLNECRKIFSSMPEHDQVS), 484–515 (WNSIIGALARSERSLPEAVVCFLNAQRAGQKL), 516–550 (NRITFSSVLSAVSSLSFGELGKQIHGLALKNNIAD), 551–581 (EATTENALIACYGKCGEMDGCEKIFSRMAER), 583–617 (DNVTWNSMISGYIHNELLAKALDLVWFMLQTGQRL), 618–652 (DSFMYATVLSAFASVATLERGMEVHACSVRACLES), 653–683 (DVVVGSALVDMYSKCGRLDYALRFFNTMPVR), 684–718 (NSYSWNSMISGYARHGQGEEALKLFETMKLDGQTP), 720–750 (DHVTFVGVLSACSHAGLLEEGFKHFESMSDS), and 756–786 (RIEHFSCMADVLGRAGELDKLEDFIEKMPMK). Positions 791–868 (IWRTVLGACC…EAGYSWVTMK (78 aa)) are type E motif. Residues 869 to 899 (DGVHMFVAGDKSHPDADVIYKKLKELNRKMR) are type E(+) motif. The tract at residues 900–995 (DAGYVPQTGF…DGACSCSDFW (96 aa)) is type DYW motif.

Belongs to the PPR family. PCMP-H subfamily.

The protein is Putative pentatricopeptide repeat-containing protein At5g09950 (PCMP-H35) of Arabidopsis thaliana (Mouse-ear cress).